Reading from the N-terminus, the 899-residue chain is Suppressor of glycerol defect protein 1 (899 aa).

Positions 24–33 are enriched in basic and acidic residues; sequence QDERFSISEG. Disordered regions lie at residues 24–181 and 248–326; these read QDER…VSYP and ETNS…DDSE. Residues 34-49 are compositionally biased toward basic residues; the sequence is KKRRRGNGKHLSRKEK. Positions 65–77 are enriched in polar residues; the sequence is REINSSRLKSAPT. A compositionally biased stretch (acidic residues) spans 103-126; the sequence is DESESNENWDSDEVLTDEVAEESG. Composition is skewed to basic and acidic residues over residues 134-143, 162-174, and 251-264; these read ETMKKLESLK, SYEK…RDTN, and SMRK…KAFS. Acidic residues predominate over residues 265-292; the sequence is SDDDLSASDFEDSDGLSESDNDSVADSD. Positions 335–540 constitute an MIF4G domain; that stretch reads SKKVNSSLNK…DTMSDLKNNR (206 aa). Positions 644-781 constitute an MI domain; sequence DIRRAIFISI…KLDVFKHVPF (138 aa). Serine 736 carries the post-translational modification Phosphoserine.

The protein belongs to the CWC22 family. As to quaternary structure, interacts with PLC1.

Its subcellular location is the nucleus. It localises to the nucleolus. Involved in osmoregulatory glycerol response, probably through its interaction with PLC1 which regulates the expression of GDP1. This chain is Suppressor of glycerol defect protein 1 (SGD1), found in Saccharomyces cerevisiae (strain ATCC 204508 / S288c) (Baker's yeast).